Here is a 345-residue protein sequence, read N- to C-terminus: N-glycosylase/DNA lyase (345 aa).

The DNA site is built by asparagine 149, arginine 154, and arginine 204. The active-site Schiff-base intermediate with DNA is lysine 249. 8-oxoguanine contacts are provided by proline 266 and aspartate 268. DNA-binding residues include histidine 270 and glutamine 287. 8-oxoguanine contacts are provided by glutamine 315 and phenylalanine 319.

It belongs to the type-1 OGG1 family. Highest expression in testis.

It is found in the nucleus. The protein localises to the nucleoplasm. It localises to the nucleus speckle. The protein resides in the nucleus matrix. It catalyses the reaction 2'-deoxyribonucleotide-(2'-deoxyribose 5'-phosphate)-2'-deoxyribonucleotide-DNA = a 3'-end 2'-deoxyribonucleotide-(2,3-dehydro-2,3-deoxyribose 5'-phosphate)-DNA + a 5'-end 5'-phospho-2'-deoxyribonucleoside-DNA + H(+). Functionally, DNA repair enzyme that incises DNA at 8-oxoG residues. Excises 7,8-dihydro-8-oxoguanine and 2,6-diamino-4-hydroxy-5-N-methylformamidopyrimidine (FAPY) from damaged DNA. Has a beta-lyase activity that nicks DNA 3' to the lesion. This Mus musculus (Mouse) protein is N-glycosylase/DNA lyase (Ogg1).